The sequence spans 526 residues: Na(+)/H(+) antiporter NhaB (526 aa).

A run of 12 helical transmembrane segments spans residues 25 to 45, 52 to 72, 89 to 109, 130 to 164, 204 to 224, 242 to 262, 307 to 327, 350 to 370, 391 to 411, 448 to 468, 479 to 499, and 505 to 525; these read ILLF…IAGW, IFTL…LLAI, LVAN…IYFM, LSLA…FYAI, LMMH…VGEP, IRMS…CVLV, IALW…LIGL, QEAL…AVII, LALF…VFVG, VATP…LAPL, MALP…EMLL, and WFYQ…LPVL.

Belongs to the NhaB Na(+)/H(+) (TC 2.A.34) antiporter family.

Its subcellular location is the cell inner membrane. It catalyses the reaction 2 Na(+)(in) + 3 H(+)(out) = 2 Na(+)(out) + 3 H(+)(in). Functionally, na(+)/H(+) antiporter that extrudes sodium in exchange for external protons. The sequence is that of Na(+)/H(+) antiporter NhaB from Aeromonas hydrophila subsp. hydrophila (strain ATCC 7966 / DSM 30187 / BCRC 13018 / CCUG 14551 / JCM 1027 / KCTC 2358 / NCIMB 9240 / NCTC 8049).